A 212-amino-acid polypeptide reads, in one-letter code: Peptide methionine sulfoxide reductase MsrA (212 aa).

Residue Cys-52 is part of the active site.

Belongs to the MsrA Met sulfoxide reductase family.

It catalyses the reaction L-methionyl-[protein] + [thioredoxin]-disulfide + H2O = L-methionyl-(S)-S-oxide-[protein] + [thioredoxin]-dithiol. The enzyme catalyses [thioredoxin]-disulfide + L-methionine + H2O = L-methionine (S)-S-oxide + [thioredoxin]-dithiol. In terms of biological role, has an important function as a repair enzyme for proteins that have been inactivated by oxidation. Catalyzes the reversible oxidation-reduction of methionine sulfoxide in proteins to methionine. This Shigella dysenteriae serotype 1 (strain Sd197) protein is Peptide methionine sulfoxide reductase MsrA.